We begin with the raw amino-acid sequence, 273 residues long: MSYLLDPSRKTITIPKLQAMRDAGEKIAMLTAYDSSFAALLDYCGVEMILVGDSLGNVMQGQQTTLPVTLEQMAYHTECAARGNQTALLLTDLPFGTYPTPEAAFASAVTLMKAGAQMVKLEGGDWLAPIVKFLVERSIPVCAHIGLTPQSVHALGGFKVQGKTDAGAAQLRRDALALQAAGAQVVLMEAVPAALAGEITQSLAVPTIGIGAGADCSGQVLVLQDMLNIYPGRKAKFVRNFMDGQPSIEAAVRAYVAAVKDGSFPAAEHTFSA.

Mg(2+) is bound by residues aspartate 53 and aspartate 92. 3-methyl-2-oxobutanoate is bound by residues 53–54 (DS), aspartate 92, and lysine 120. Glutamate 122 contributes to the Mg(2+) binding site. The Proton acceptor role is filled by glutamate 189.

It belongs to the PanB family. In terms of assembly, homodecamer; pentamer of dimers. Mg(2+) serves as cofactor.

It localises to the cytoplasm. The enzyme catalyses 3-methyl-2-oxobutanoate + (6R)-5,10-methylene-5,6,7,8-tetrahydrofolate + H2O = 2-dehydropantoate + (6S)-5,6,7,8-tetrahydrofolate. Its pathway is cofactor biosynthesis; (R)-pantothenate biosynthesis; (R)-pantoate from 3-methyl-2-oxobutanoate: step 1/2. Its function is as follows. Catalyzes the reversible reaction in which hydroxymethyl group from 5,10-methylenetetrahydrofolate is transferred onto alpha-ketoisovalerate to form ketopantoate. In Cupriavidus taiwanensis (strain DSM 17343 / BCRC 17206 / CCUG 44338 / CIP 107171 / LMG 19424 / R1) (Ralstonia taiwanensis (strain LMG 19424)), this protein is 3-methyl-2-oxobutanoate hydroxymethyltransferase.